A 259-amino-acid polypeptide reads, in one-letter code: MSEVPVARVWLVLLLLTVQVGVTAGAPWQCAPCSAEKLALCPPVSASCSEVTRSAGCGCCPMCALPLGAACGVATARCARGLSCRALPGEQQPLHALTRGQGACVQESDASAPHAAEAGSPESPESTEITEEELLDNFHLMAPSEEDHSILWDAISTYDGSKALHVTNIKKWKEPCRIELYRVVESLAKAQETSGEEISKFYLPNCNKNGFYHSRQCETSMDGEAGLCWCVYPWNGKRIPGSPEIRGDPNCQIYFNVQN.

Positions 1–25 (MSEVPVARVWLVLLLLTVQVGVTAG) are cleaved as a signal peptide. Positions 26–107 (APWQCAPCSA…TRGQGACVQE (82 aa)) constitute an IGFBP N-terminal domain. Cystine bridges form between Cys-30–Cys-57, Cys-33–Cys-59, Cys-41–Cys-60, Cys-48–Cys-63, Cys-71–Cys-84, and Cys-78–Cys-104. Phosphoserine; by FAM20C is present on Ser-45. A phosphoserine mark is found at Ser-120, Ser-123, Ser-126, and Ser-144. Phosphoserine; by FAM20C is present on Ser-156. Thr-157 carries the post-translational modification Phosphothreonine; by FAM20C. Tyr-158 bears the Phosphotyrosine mark. A Thyroglobulin type-1 domain is found at 173 to 251 (KEPCRIELYR…SPEIRGDPNC (79 aa)). 3 cysteine pairs are disulfide-bonded: Cys-176–Cys-206, Cys-217–Cys-228, and Cys-230–Cys-251. Thr-193 carries the post-translational modification Phosphothreonine; by FAM20C. 2 positions are modified to phosphoserine; by FAM20C: Ser-194 and Ser-199. Ser-242 carries the phosphoserine; by FAM20C modification. The Cell attachment site signature appears at 246–248 (RGD).

As to quaternary structure, binds equally well IGF1 and IGF2. Interacts with integrin ITGA5:ITGB1. Interacts with VHL; this interaction inhibits HIF1A degradation. Phosphorylated; probably by casein kinase II. Phosphorylation alters the affinity of the protein for IGFs. In amniotic fluid, the unmodified protein is the most abundant form, while mono-, bi-, tri- and tetraphosphorylated forms are present in decreasing amounts. The phosphorylation state may influence the propensity to proteolysis.

It localises to the secreted. Its function is as follows. Multifunctional protein that plays a critical role in regulating the availability of IGFs such as IGF1 and IGF2 to their receptors and thereby regulates IGF-mediated cellular processes including cell migration, proliferation, differentiation or apoptosis in a cell-type specific manner. Also plays a positive role in cell migration by interacting with integrin ITGA5:ITGB1 through its RGD motif. Mechanistically, binding to integrins leads to activation of focal adhesion kinase/PTK2 and stimulation of the mitogen-activated protein kinase (MAPK) pathway. Regulates cardiomyocyte apoptosis by suppressing HIF-1alpha/HIF1A ubiquitination and subsequent degradation. This is Insulin-like growth factor-binding protein 1 (IGFBP1) from Homo sapiens (Human).